We begin with the raw amino-acid sequence, 282 residues long: Ribosome biogenesis GTPase A (282 aa).

A CP-type G domain is found at 14-178 (RREVTEKLKL…LLDTPGILWP (165 aa)). GTP-binding positions include 58–61 (NKAD), 86–87 (NS), 130–135 (NVGKST), and G174.

Belongs to the TRAFAC class YlqF/YawG GTPase family. MTG1 subfamily. In terms of assembly, interacts with ctc. Interacts with the immature 50S ribosome subunit. 2 molecules of rbgA bind to one 50S subunit.

The protein resides in the cytoplasm. In terms of biological role, essential protein that is required for a late step of 50S ribosomal subunit assembly. Has GTPase activity that is stimulated by interaction with the immature 50S ribosome subunit. Binds to the 23S rRNA. Required for the association of ribosomal proteins rplP and rpmA with the large subunit. The sequence is that of Ribosome biogenesis GTPase A (rbgA) from Bacillus spizizenii (strain ATCC 23059 / NRRL B-14472 / W23) (Bacillus subtilis subsp. spizizenii).